We begin with the raw amino-acid sequence, 101 residues long: MMLEHVLVLSAYLFSIGIYGLITSRNMVRALMCLELILNAVNINFVTFSDFFDNRQLKGDIFSIFVIAIAAAEAAIGPAIVSSIYRNRKSTRINQSNLLNK.

3 consecutive transmembrane segments (helical) span residues 2–22, 32–52, and 61–81; these read MLEH…YGLI, MCLE…SDFF, and IFSI…PAIV.

Belongs to the complex I subunit 4L family. In terms of assembly, NDH is composed of at least 16 different subunits, 5 of which are encoded in the nucleus.

The protein resides in the plastid. Its subcellular location is the chloroplast thylakoid membrane. It carries out the reaction a plastoquinone + NADH + (n+1) H(+)(in) = a plastoquinol + NAD(+) + n H(+)(out). It catalyses the reaction a plastoquinone + NADPH + (n+1) H(+)(in) = a plastoquinol + NADP(+) + n H(+)(out). Its function is as follows. NDH shuttles electrons from NAD(P)H:plastoquinone, via FMN and iron-sulfur (Fe-S) centers, to quinones in the photosynthetic chain and possibly in a chloroplast respiratory chain. The immediate electron acceptor for the enzyme in this species is believed to be plastoquinone. Couples the redox reaction to proton translocation, and thus conserves the redox energy in a proton gradient. This chain is NAD(P)H-quinone oxidoreductase subunit 4L, chloroplastic, found in Vitis vinifera (Grape).